Consider the following 590-residue polypeptide: ATP-dependent lipid A-core flippase (590 aa).

6 consecutive transmembrane segments (helical) span residues 31–51 (IFIA…VIPK), 74–94 (AILT…GYLL), 132–152 (AVIF…ITLV), 159–179 (VALL…VSVI), 259–279 (VTAF…MIQA), and 286–306 (IGGF…LKHL). The ABC transmembrane type-1 domain maps to 33 to 315 (IAAILAMAVV…LTDINQPLTR (283 aa)). In terms of domain architecture, ABC transporter spans 347–585 (LVFERVGFRY…NGLYAGLHRI (239 aa)). 381-388 (GPSGSGKT) contacts ATP.

It belongs to the ABC transporter superfamily. Lipid exporter (TC 3.A.1.106) family. In terms of assembly, homodimer.

The protein resides in the cell inner membrane. It carries out the reaction ATP + H2O + lipid A-core oligosaccharideSide 1 = ADP + phosphate + lipid A-core oligosaccharideSide 2.. Its function is as follows. Involved in lipopolysaccharide (LPS) biosynthesis. Translocates lipid A-core from the inner to the outer leaflet of the inner membrane. Transmembrane domains (TMD) form a pore in the inner membrane and the ATP-binding domain (NBD) is responsible for energy generation. The polypeptide is ATP-dependent lipid A-core flippase (Cupriavidus pinatubonensis (strain JMP 134 / LMG 1197) (Cupriavidus necator (strain JMP 134))).